We begin with the raw amino-acid sequence, 463 residues long: Gamma-aminobutyric acid receptor subunit alpha-5 (463 aa).

Residues 1-25 (MDNGMLSRFIMTQTLLVFCISMTLS) form the signal peptide. The Extracellular segment spans residues 26-260 (SHFGFSQMPT…FHLKRKIGYF (235 aa)). Asn45 carries N-linked (GlcNAc...) asparagine glycosylation. Arg101 provides a ligand contact to 4-aminobutanoate. N-linked (GlcNAc...) asparagine glycosylation occurs at Asn145. Thr164 provides a ligand contact to 4-aminobutanoate. An intrachain disulfide couples Cys173 to Cys187. Residues Asn207 and Asn236 are each glycosylated (N-linked (GlcNAc...) asparagine). The next 3 helical transmembrane spans lie at 261–281 (VIQTYLPCIMTVILSQVSFWL), 287–308 (PARTVFGVTTVLTMTTLSISAR), and 319–340 (AMDWFIAVCYAFVFSALIEFAT). The Cytoplasmic segment spans residues 341–428 (VNYFTKRGWA…TYNSISKIDK (88 aa)). Residue Lys355 forms a Glycyl lysine isopeptide (Lys-Gly) (interchain with G-Cter in ubiquitin) linkage. Positions 387 to 408 (PNIPKEQPPAGTANAPTVSIKA) are disordered. A helical membrane pass occupies residues 429 to 449 (MSRIVFPILFGTFNLVYWATY).

This sequence belongs to the ligand-gated ion channel (TC 1.A.9) family. Gamma-aminobutyric acid receptor (TC 1.A.9.5) subfamily. GABRA5 sub-subfamily. As to quaternary structure, heteropentamer, formed by a combination of alpha (GABRA1-6), beta (GABRB1-3), gamma (GABRG1-3), delta (GABRD), epsilon (GABRE), rho (GABRR1-3), pi (GABRP) and theta (GABRQ) chains, each subunit exhibiting distinct physiological and pharmacological properties. As to expression, expressed in brain, in hippocampal pyramidal neurons.

It localises to the postsynaptic cell membrane. It is found in the cell membrane. The catalysed reaction is chloride(in) = chloride(out). Alpha subunit of the heteropentameric ligand-gated chloride channel gated by gamma-aminobutyric acid (GABA), a major inhibitory neurotransmitter in the brain. GABA-gated chloride channels, also named GABA(A) receptors (GABAAR), consist of five subunits arranged around a central pore and contain GABA active binding site(s) located at the alpha and beta subunit interface(s). When activated by GABA, GABAARs selectively allow the flow of chloride anions across the cell membrane down their electrochemical gradient. GABAARs containing alpha-5/GABRA5 are mainly extrasynaptic and contribute to the tonic GABAergic inhibition of the hippocampus. Extrasynaptic alpha-5-containing GABAARs in CA1 pyramidal neurons play a role in learning and memory processes. This Mus musculus (Mouse) protein is Gamma-aminobutyric acid receptor subunit alpha-5.